Consider the following 155-residue polypeptide: Ribonuclease H (155 aa).

In terms of domain architecture, RNase H type-1 spans 1 to 142; that stretch reads MLKQVEIFTD…CDELARAAAM (142 aa). Asp-10, Glu-48, Asp-70, and Asp-134 together coordinate Mg(2+).

It belongs to the RNase H family. In terms of assembly, monomer. Mg(2+) serves as cofactor.

It is found in the cytoplasm. The enzyme catalyses Endonucleolytic cleavage to 5'-phosphomonoester.. Its function is as follows. Endonuclease that specifically degrades the RNA of RNA-DNA hybrids. This is Ribonuclease H from Escherichia fergusonii (strain ATCC 35469 / DSM 13698 / CCUG 18766 / IAM 14443 / JCM 21226 / LMG 7866 / NBRC 102419 / NCTC 12128 / CDC 0568-73).